We begin with the raw amino-acid sequence, 450 residues long: Sorting nexin-4 (450 aa).

Methionine 1 is subject to N-acetylmethionine. Residues 1–46 form a disordered region; sequence MEQAPPDPERQLQPAPLEPLGSPDAGLGAAVGKEAEGAGEESSGVD. Serine 22 is modified (phosphoserine). The PX domain occupies 61–187; it reads SVSEAEKRTG…YLFLTQEGNW (127 aa). A 1,2-diacyl-sn-glycero-3-phospho-(1D-myo-inositol-3-phosphate) is bound by residues arginine 106, serine 108, lysine 132, and arginine 154.

It belongs to the sorting nexin family. Heterodimer; heterodimerizes with SNX7 or SNX30. Interacts with WWC1/KIBRA. Identified in a complex with WWC1/KIBRA and dynein components DYNLL1 and DYNC1I2. Interacts with BIN1.

The protein localises to the early endosome membrane. Its function is as follows. Involved in the regulation of endocytosis and in several stages of intracellular trafficking. Plays a role in recycling endocytosed transferrin receptor and prevent its degradation. Involved in autophagosome assembly by regulating trafficking and recycling of phospholipid scramblase ATG9A. The polypeptide is Sorting nexin-4 (Homo sapiens (Human)).